The following is a 395-amino-acid chain: S-adenosylmethionine synthase (395 aa).

His16 is an ATP binding site. Asp18 lines the Mg(2+) pocket. Position 44 (Glu44) interacts with K(+). Positions 57 and 100 each coordinate L-methionine. The tract at residues 100 to 110 is flexible loop; that stretch reads QSTDIAQGVNE. ATP is bound by residues 174–176, 241–242, Asp250, 256–257, Ala273, and Lys277; these read DAK, RF, and RK. Asp250 contributes to the L-methionine binding site. Lys281 provides a ligand contact to L-methionine.

The protein belongs to the AdoMet synthase family. In terms of assembly, homotetramer; dimer of dimers. Mg(2+) is required as a cofactor. Requires K(+) as cofactor.

The protein localises to the cytoplasm. It carries out the reaction L-methionine + ATP + H2O = S-adenosyl-L-methionine + phosphate + diphosphate. It participates in amino-acid biosynthesis; S-adenosyl-L-methionine biosynthesis; S-adenosyl-L-methionine from L-methionine: step 1/1. Functionally, catalyzes the formation of S-adenosylmethionine (AdoMet) from methionine and ATP. The overall synthetic reaction is composed of two sequential steps, AdoMet formation and the subsequent tripolyphosphate hydrolysis which occurs prior to release of AdoMet from the enzyme. In Streptococcus uberis (strain ATCC BAA-854 / 0140J), this protein is S-adenosylmethionine synthase.